A 239-amino-acid chain; its full sequence is Large ribosomal subunit protein bL25 (239 aa).

The disordered stretch occupies residues 217–239 (IKAEAHAAEGTQAEGSTEEGQQQ). Polar residues predominate over residues 229–239 (AEGSTEEGQQQ).

It belongs to the bacterial ribosomal protein bL25 family. CTC subfamily. As to quaternary structure, part of the 50S ribosomal subunit; part of the 5S rRNA/L5/L18/L25 subcomplex. Contacts the 5S rRNA. Binds to the 5S rRNA independently of L5 and L18.

This is one of the proteins that binds to the 5S RNA in the ribosome where it forms part of the central protuberance. The polypeptide is Large ribosomal subunit protein bL25 (Deinococcus deserti (strain DSM 17065 / CIP 109153 / LMG 22923 / VCD115)).